The following is a 1501-amino-acid chain: Protein SNQ2 (1501 aa).

A compositionally biased stretch (polar residues) spans 1-17; the sequence is MSNIKSTQDSSHNAVAR. The tract at residues 1–56 is disordered; it reads MSNIKSTQDSSHNAVARSSSASFAASEESFTGITHDKDEQSDTPADKLTKMLTGPA. Ser-2 is modified (N-acetylserine). Residues 18 to 30 show a composition bias toward low complexity; the sequence is SSSASFAASEESF. Residues Ser-26 and Ser-29 each carry the phosphoserine modification. Positions 34–49 are enriched in basic and acidic residues; it reads THDKDEQSDTPADKLT. Phosphoserine is present on residues Ser-64, Ser-80, and Ser-86. In terms of domain architecture, ABC transporter 1 spans 161–410; it reads FKGIKAKRHQ…FAKMGYLCPP (250 aa). 3 N-linked (GlcNAc...) asparagine glycosylation sites follow: Asn-273, Asn-334, and Asn-518. A run of 5 helical transmembrane segments spans residues 521–541, 554–574, 600–620, 628–648, and 664–680; these read YTVINVCSAIIQSFITGSLFY, GGVLYFALLYYSLMGLANISF, LASFPFRMIGLTCFFIILFFL, GSFFTIYLFLTMCSEAINGLF, and ISGILMMSISMYSTYMI. A glycan (N-linked (GlcNAc...) asparagine) is linked at Asn-730. A helical membrane pass occupies residues 771–789; it reads FGILWCFLLGYVVLKVIFT. The region spanning 853-1095 is the ABC transporter 2 domain; sequence FIWKDVCFTI…ILNYFERNGA (243 aa). N-linked (GlcNAc...) asparagine glycosylation is present at Asn-874. 889 to 896 contributes to the ATP binding site; that stretch reads GESGAGKT. Thr-1153 is modified (phosphothreonine). 4 consecutive transmembrane segments (helical) span residues 1190-1212, 1216-1236, 1277-1296, and 1333-1352; these read IMSKMMLMLVGGLYIGFTFFNVG, VGLQNAMFAAFISIILSAPAM, HLFFSTIFFVSSYFPLRIFF, and ANVILGLCLSFMLSFCGVTQ. The N-linked (GlcNAc...) asparagine glycan is linked to Asn-1401. A helical membrane pass occupies residues 1455-1475; sequence FGIFWIYIFFNIIAMVCVYYL.

It belongs to the ABC transporter superfamily. ABCG family. PDR (TC 3.A.1.205) subfamily.

Its subcellular location is the membrane. Functionally, could be an ATP-dependent permease. Confers hyper-resistance to the mutagens 4-nitroquinoline-N-oxide (4-NQO) and triaziquone, as well as to the chemicals sulphomethuron methyl phenanthroline when present in multiple copies. Exhibits nucleoside triphosphatase activity. The chain is Protein SNQ2 (SNQ2) from Saccharomyces cerevisiae (strain ATCC 204508 / S288c) (Baker's yeast).